The following is a 350-amino-acid chain: UDP-glucose 4-epimerase GEPI48 (350 aa).

NAD(+) is bound at residue 5–36 (TVLVTGGAGYIGSHTVLQLLLGGFKAVVVDNL). Residue Ser130 coordinates substrate. The Proton acceptor role is filled by Tyr154.

Belongs to the NAD(P)-dependent epimerase/dehydratase family. It depends on NAD(+) as a cofactor.

The catalysed reaction is UDP-alpha-D-glucose = UDP-alpha-D-galactose. It functions in the pathway carbohydrate metabolism; galactose metabolism. The chain is UDP-glucose 4-epimerase GEPI48 from Cyamopsis tetragonoloba (Guar).